A 424-amino-acid chain; its full sequence is Serine--tRNA ligase (424 aa).

Residues M1–R15 are compositionally biased toward basic and acidic residues. The disordered stretch occupies residues M1 to V27. T230–E232 provides a ligand contact to L-serine. ATP-binding positions include R261–E263 and V277. An L-serine-binding site is contributed by E284. Position 348 to 351 (E348 to S351) interacts with ATP. T382 contacts L-serine.

This sequence belongs to the class-II aminoacyl-tRNA synthetase family. Type-1 seryl-tRNA synthetase subfamily. As to quaternary structure, homodimer. The tRNA molecule binds across the dimer.

It is found in the cytoplasm. It catalyses the reaction tRNA(Ser) + L-serine + ATP = L-seryl-tRNA(Ser) + AMP + diphosphate + H(+). It carries out the reaction tRNA(Sec) + L-serine + ATP = L-seryl-tRNA(Sec) + AMP + diphosphate + H(+). The protein operates within aminoacyl-tRNA biosynthesis; selenocysteinyl-tRNA(Sec) biosynthesis; L-seryl-tRNA(Sec) from L-serine and tRNA(Sec): step 1/1. Its function is as follows. Catalyzes the attachment of serine to tRNA(Ser). Is also able to aminoacylate tRNA(Sec) with serine, to form the misacylated tRNA L-seryl-tRNA(Sec), which will be further converted into selenocysteinyl-tRNA(Sec). The chain is Serine--tRNA ligase from Cutibacterium acnes (strain DSM 16379 / KPA171202) (Propionibacterium acnes).